The primary structure comprises 142 residues: Putative pre-16S rRNA nuclease (142 aa).

Belongs to the YqgF nuclease family.

It is found in the cytoplasm. Functionally, could be a nuclease involved in processing of the 5'-end of pre-16S rRNA. The sequence is that of Putative pre-16S rRNA nuclease from Lactobacillus delbrueckii subsp. bulgaricus (strain ATCC 11842 / DSM 20081 / BCRC 10696 / JCM 1002 / NBRC 13953 / NCIMB 11778 / NCTC 12712 / WDCM 00102 / Lb 14).